A 205-amino-acid chain; its full sequence is Probable molybdenum cofactor guanylyltransferase (205 aa).

GTP contacts are provided by residues L10–G12, K22, D69, and D100. A Mg(2+)-binding site is contributed by D100.

Belongs to the MobA family. The cofactor is Mg(2+).

The protein resides in the cytoplasm. It carries out the reaction Mo-molybdopterin + GTP + H(+) = Mo-molybdopterin guanine dinucleotide + diphosphate. Functionally, transfers a GMP moiety from GTP to Mo-molybdopterin (Mo-MPT) cofactor (Moco or molybdenum cofactor) to form Mo-molybdopterin guanine dinucleotide (Mo-MGD) cofactor. This Natranaerobius thermophilus (strain ATCC BAA-1301 / DSM 18059 / JW/NM-WN-LF) protein is Probable molybdenum cofactor guanylyltransferase.